A 729-amino-acid chain; its full sequence is Putative cyclic nucleotide-gated ion channel 19 (729 aa).

The Cytoplasmic segment spans residues 1 to 172; sequence MAHTRTFTSR…SKFVQVWTRV (172 aa). The disordered stretch occupies residues 52 to 82; the sequence is SGPIHSTRRTEPLFSPSPQESPDSSSTVDVP. The segment covering 67-81 has biased composition (low complexity); that stretch reads PSPQESPDSSSTVDV. Residues 173–193 traverse the membrane as a helical segment; that stretch reads LAFSSLVAIFIDPLFFFLLLI. At 194–208 the chain is on the extracellular side; sequence QQDNKCIAIDWRATK. A helical transmembrane segment spans residues 209 to 229; the sequence is VLVSLRSITDLIFFINILLQF. Residues 230-261 lie on the Cytoplasmic side of the membrane; that stretch reads RLAYVAPESRIVGAGQLVDHPRKIARHYFRGK. The helical transmembrane segment at 262 to 282 threads the bilayer; the sequence is FLLDMFIVFPIPQIMILRIIP. Residues 283–295 lie on the Extracellular side of the membrane; it reads LHLGTRREESEKQ. The chain crosses the membrane as a helical span at residues 296–316; the sequence is ILRATVLFQYIPKLYRLLPLL. Residues 317–332 are Cytoplasmic-facing; sequence AGQTSTGFIFESAWAN. The helical transmembrane segment at 333–353 threads the bilayer; it reads FVINLLTFMLAGHAVGSCWYL. Topologically, residues 354–451 are extracellular; the sequence is SALQRVKKCM…STLAGNLSPS (98 aa). Residues 452–472 traverse the membrane as a helical segment; it reads YSVGEVFFTMGIIGLGLLLFA. At 473–729 the chain is on the cytoplasmic side; it reads RLIGNMHNFL…LNTAHSNSNR (257 aa). A nucleoside 3',5'-cyclic phosphate-binding positions include 560-677 and glutamate 625; that span reads IFSL…VTSL. Residues 678–694 form a calmodulin-binding region; the sequence is FSRFLRSHRVQGAIRYE. The IQ domain maps to 699–728; the sequence is RLRAAMQIQVAWRYRKRQLQRLNTAHSNSN.

It belongs to the cyclic nucleotide-gated cation channel (TC 1.A.1.5) family. In terms of assembly, homotetramer or heterotetramer.

It localises to the cell membrane. Functionally, putative cyclic nucleotide-gated ion channel. The protein is Putative cyclic nucleotide-gated ion channel 19 (CNGC19) of Arabidopsis thaliana (Mouse-ear cress).